Consider the following 271-residue polypeptide: Orotidine 5'-phosphate decarboxylase (271 aa).

Lys-95 serves as the catalytic Proton donor.

Belongs to the OMP decarboxylase family. Type 2 subfamily.

The enzyme catalyses orotidine 5'-phosphate + H(+) = UMP + CO2. Its pathway is pyrimidine metabolism; UMP biosynthesis via de novo pathway; UMP from orotate: step 2/2. The protein is Orotidine 5'-phosphate decarboxylase of Aromatoleum aromaticum (strain DSM 19018 / LMG 30748 / EbN1) (Azoarcus sp. (strain EbN1)).